We begin with the raw amino-acid sequence, 128 residues long: Sirohydrochlorin cobaltochelatase (128 aa).

His-9 acts as the Proton acceptor in catalysis. Residue His-9 participates in Co(2+) binding. Substrate contacts are provided by residues Lys-43 and 68-73 (FATGTH). Residue His-73 coordinates Co(2+).

Belongs to the CbiX family. CbiXS subfamily. Homotetramer; dimer of dimers.

It carries out the reaction Co-sirohydrochlorin + 2 H(+) = sirohydrochlorin + Co(2+). It participates in cofactor biosynthesis; adenosylcobalamin biosynthesis; cob(II)yrinate a,c-diamide from sirohydrochlorin (anaerobic route): step 1/10. In terms of biological role, catalyzes the insertion of Co(2+) into sirohydrochlorin as part of the anaerobic pathway to cobalamin biosynthesis. The protein is Sirohydrochlorin cobaltochelatase of Saccharolobus solfataricus (strain ATCC 35092 / DSM 1617 / JCM 11322 / P2) (Sulfolobus solfataricus).